Consider the following 309-residue polypeptide: Malate dehydrogenase (309 aa).

NAD(+)-binding positions include 9-14 (GAGFVG) and aspartate 33. Substrate contacts are provided by arginine 82 and arginine 88. NAD(+) contacts are provided by residues asparagine 95 and 118–120 (VNN). Substrate contacts are provided by asparagine 120 and arginine 151. Histidine 175 serves as the catalytic Proton acceptor.

It belongs to the LDH/MDH superfamily. MDH type 3 family. In terms of assembly, homotetramer (active enzyme); homodimer and homotrimer at temperatures lower than 55 degrees Celsius (inactive forms).

It carries out the reaction (S)-malate + NAD(+) = oxaloacetate + NADH + H(+). Functionally, catalyzes the reversible oxidation of malate to oxaloacetate. In Chloroflexus aurantiacus (strain ATCC 29366 / DSM 635 / J-10-fl), this protein is Malate dehydrogenase.